Reading from the N-terminus, the 122-residue chain is Small ribosomal subunit protein uS13 (122 aa).

The segment at 92–122 (HRMGLPVRGQRTKTNARTRKGPSKPVSGKKK) is disordered. Residues 101 to 122 (QRTKTNARTRKGPSKPVSGKKK) are compositionally biased toward basic residues.

Belongs to the universal ribosomal protein uS13 family. In terms of assembly, part of the 30S ribosomal subunit. Forms a loose heterodimer with protein S19. Forms two bridges to the 50S subunit in the 70S ribosome.

Its function is as follows. Located at the top of the head of the 30S subunit, it contacts several helices of the 16S rRNA. In the 70S ribosome it contacts the 23S rRNA (bridge B1a) and protein L5 of the 50S subunit (bridge B1b), connecting the 2 subunits; these bridges are implicated in subunit movement. Contacts the tRNAs in the A and P-sites. In Ruminiclostridium cellulolyticum (strain ATCC 35319 / DSM 5812 / JCM 6584 / H10) (Clostridium cellulolyticum), this protein is Small ribosomal subunit protein uS13.